Reading from the N-terminus, the 454-residue chain is Protein odr-4 homolog (454 aa).

Transmembrane regions (helical) follow at residues 82–102 (MLPG…ELAN) and 432–452 (IGVI…FHYF).

The protein belongs to the ODR-4 family.

The protein resides in the membrane. Functionally, may play a role in the trafficking of a subset of G-protein coupled receptors. The polypeptide is Protein odr-4 homolog (ODR4) (Pongo abelii (Sumatran orangutan)).